We begin with the raw amino-acid sequence, 208 residues long: Dephospho-CoA kinase (208 aa).

The DPCK domain occupies 8 to 208 (LVGVTGGIGS…VYQSLLTVVE (201 aa)). 16 to 21 (GSGKST) lines the ATP pocket.

It belongs to the CoaE family.

The protein localises to the cytoplasm. The catalysed reaction is 3'-dephospho-CoA + ATP = ADP + CoA + H(+). The protein operates within cofactor biosynthesis; coenzyme A biosynthesis; CoA from (R)-pantothenate: step 5/5. In terms of biological role, catalyzes the phosphorylation of the 3'-hydroxyl group of dephosphocoenzyme A to form coenzyme A. The protein is Dephospho-CoA kinase of Chlorobaculum tepidum (strain ATCC 49652 / DSM 12025 / NBRC 103806 / TLS) (Chlorobium tepidum).